The sequence spans 701 residues: Glycine--tRNA ligase beta subunit (701 aa).

The protein belongs to the class-II aminoacyl-tRNA synthetase family. As to quaternary structure, tetramer of two alpha and two beta subunits.

The protein localises to the cytoplasm. It catalyses the reaction tRNA(Gly) + glycine + ATP = glycyl-tRNA(Gly) + AMP + diphosphate. The chain is Glycine--tRNA ligase beta subunit from Thiobacillus denitrificans (strain ATCC 25259 / T1).